The sequence spans 184 residues: Protein Syd (184 aa).

It belongs to the Syd family.

The protein localises to the cell inner membrane. In terms of biological role, interacts with the SecY protein in vivo. May bind preferentially to an uncomplexed state of SecY, thus functioning either as a chelating agent for excess SecY in the cell or as a regulatory factor that negatively controls the translocase function. The sequence is that of Protein Syd from Edwardsiella ictaluri (strain 93-146).